The primary structure comprises 1086 residues: Receptor-type guanylate cyclase gcy-6 (1086 aa).

A signal peptide spans 1-21 (MIGVYLRSVIFPLLFVIQTIC). Residues 22–487 (QPPGNVFHLG…PANVFFQYIG (466 aa)) are Extracellular-facing. Asparagine 325, asparagine 343, asparagine 387, and asparagine 427 each carry an N-linked (GlcNAc...) asparagine glycan. A helical membrane pass occupies residues 488–508 (WFIAAIIIIFFTIMGAILAFI). At 509 to 1086 (YLCHAKQQEV…APKILKKKQD (578 aa)) the chain is on the cytoplasmic side. Positions 560-836 (SSTLSEVGET…NDNLMDHVFN (277 aa)) constitute a Protein kinase domain. ATP is bound by residues 566–574 (VGETRNYLF) and lysine 589. The Guanylate cyclase domain occupies 894–1024 (TLFFSDVVSF…DAVNTASRME (131 aa)).

This sequence belongs to the adenylyl cyclase class-4/guanylyl cyclase family. In terms of tissue distribution, expressed in both ASEL and ASER neurons throughout late embryonic and early larval stages. In adults, expressed asymmetrically in ASE left (ASEL) sensory neuron.

It is found in the cell membrane. It catalyses the reaction GTP = 3',5'-cyclic GMP + diphosphate. In terms of biological role, guanylate cyclase involved in the production of the second messenger cGMP. Regulates chemotaxis responses toward the salt ion Mg(2+) and to a lesser extent toward Cl(1-) in ASE left (ASEL) sensory neuron. In Caenorhabditis elegans, this protein is Receptor-type guanylate cyclase gcy-6.